An 828-amino-acid polypeptide reads, in one-letter code: Fibroblast growth factor receptor 4 (828 aa).

The first 31 residues, 1-31 (MSGSIRRSYTAMQNFPRFLLGVLFVATLSSC), serve as a signal peptide directing secretion. Residues 32-392 (RPRLSEDEAN…AEPAESRYMD (361 aa)) are Extracellular-facing. Residues 33 to 127 (PRLSEDEANW…GKILRRFSIS (95 aa)) form the Ig-like C2-type 1 domain. A disulfide bridge connects residues Cys67 and Cys112. A glycan (N-linked (GlcNAc...) asparagine) is linked at Asn70. The tract at residues 132 to 156 (LASGDEEEEEEDDDDEDGRREDTTA) is disordered. Residues 135–147 (GDEEEEEEDDDDE) show a composition bias toward acidic residues. 2 Ig-like C2-type domains span residues 169–259 (PYWT…LTYT) and 272–372 (PILQ…AWLT). The cysteines at positions 194 and 247 are disulfide-linked. N-linked (GlcNAc...) asparagine glycans are attached at residues Asn244, Asn281, Asn313, and Asn345. An intrachain disulfide couples Cys294 to Cys356. The chain crosses the membrane as a helical span at residues 393-413 (IIIYTSGFLAVAMAIMIVILC). The Cytoplasmic segment spans residues 414–828 (RMQTPHSKQT…YHNIHSQLGT (415 aa)). Positions 490–777 (LVLGKPLGEG…ILTAVSEEYL (288 aa)) constitute a Protein kinase domain. ATP-binding positions include 496–504 (LGEGCFGQV) and Lys526. Residue Asp635 is the Proton acceptor of the active site. A phosphotyrosine; by autocatalysis mark is found at Tyr665, Tyr666, and Tyr776.

The protein belongs to the protein kinase superfamily. Tyr protein kinase family. Fibroblast growth factor receptor subfamily. Post-translationally, ubiquitinated. Subject to proteasomal degradation when not fully glycosylated. In terms of processing, autophosphorylated. Binding of FGF family members together with heparan sulfate proteoglycan or heparin promotes receptor dimerization and autophosphorylation on tyrosine residues. Autophosphorylation occurs in trans between the two FGFR molecules present in the dimer.

Its subcellular location is the cell membrane. The protein localises to the endosome. It localises to the endoplasmic reticulum. It catalyses the reaction L-tyrosyl-[protein] + ATP = O-phospho-L-tyrosyl-[protein] + ADP + H(+). Its activity is regulated as follows. Present in an inactive conformation in the absence of bound ligand. Ligand binding leads to dimerization and activation by autophosphorylation on tyrosine residues. Its function is as follows. Tyrosine-protein kinase that acts as a cell-surface receptor for fibroblast growth factors and plays a role in the regulation of cell proliferation, differentiation and migration, and in regulation of lipid metabolism, bile acid biosynthesis, glucose uptake, vitamin D metabolism and phosphate homeostasis. Required for normal down-regulation of the expression of CYP7A1, the rate-limiting enzyme in bile acid synthesis, in response to FGF19. Phosphorylates PLCG1 and FRS2. Ligand binding leads to the activation of several signaling cascades. Activation of PLCG1 leads to the production of the cellular signaling molecules diacylglycerol and inositol 1,4,5-trisphosphate. Phosphorylation of FRS2 triggers recruitment of GRB2, GAB1, PIK3R1 and SOS1, and mediates activation of RAS, MAPK1/ERK2, MAPK3/ERK1 and the MAP kinase signaling pathway, as well as of the AKT1 signaling pathway. This is Fibroblast growth factor receptor 4 (fgfr4) from Xenopus laevis (African clawed frog).